The chain runs to 302 residues: Cyclopropane mycolic acid synthase 2 (302 aa).

Residues 41-42, 76-84, 102-107, and 131-132 contribute to the S-adenosyl-L-methionine site; these read YS, LLDIGCGWG, TLSENQ, and WE. Cysteine 284 is an active-site residue.

Belongs to the CFA/CMAS family. In terms of assembly, homodimer.

The protein localises to the cytoplasm. The enzyme catalyses a 1-acyl-2-(9Z)-enoyl-sn-glycero-3-phospholipid + S-adenosyl-L-methionine = a 1-acyl-2-(9-cyclopronane)-acyl-sn-glycero-3-phospholipid + S-adenosyl-L-homocysteine + H(+). It functions in the pathway lipid metabolism; mycolic acid biosynthesis. Its function is as follows. Catalyzes the formation of trans cyclopropanated ketomycolate or methoxymycolate through the conversion of a double bond to a cyclopropane ring at the proximal position of an oxygenated mycolic acid via the transfer of a methylene group from S-adenosyl-L-methionine. In the absence of MmaA2, CmaA2 has a non-specific cis-cyclopropanating activity and is able to catalyze the conversion of a double bond to a cis cyclopropane ring at the distal position of an alpha mycolic acid. Cyclopropanated mycolic acids are key factors participating in cell envelope permeability, host immunomodulation and persistence. This Mycobacterium bovis (strain ATCC BAA-935 / AF2122/97) protein is Cyclopropane mycolic acid synthase 2 (cmaA2).